Consider the following 349-residue polypeptide: tRNA pseudouridine synthase D (349 aa).

Phe26 lines the substrate pocket. The active-site Nucleophile is Asp79. A substrate-binding site is contributed by Asn128. Residues Gly154 to Leu302 form the TRUD domain. Phe328 serves as a coordination point for substrate.

The protein belongs to the pseudouridine synthase TruD family.

It carries out the reaction uridine(13) in tRNA = pseudouridine(13) in tRNA. Responsible for synthesis of pseudouridine from uracil-13 in transfer RNAs. The protein is tRNA pseudouridine synthase D of Yersinia pseudotuberculosis serotype IB (strain PB1/+).